The following is a 200-amino-acid chain: Intraflagellar transport protein 43 homolog (200 aa).

Disordered stretches follow at residues 56–76 (KTGK…IAAP) and 175–200 (ERID…SSKY). Positions 175–192 (ERIDAKDQPSDSRSRNAR) are enriched in basic and acidic residues.

Belongs to the IFT43 family. As to quaternary structure, component of the IFT complex A (IFT-A) composed of at least che-11, daf-10, dyf-2, ift-139, ift-43 and ifta-1. In terms of tissue distribution, expressed in ciliated sensory neurons.

The protein localises to the cell projection. The protein resides in the cilium. As a component of IFT complex A (IFT-A), a complex required for retrograde ciliary transport and entry into cilia of G protein-coupled receptors (GPCRs), it is involved in ciliogenesis. In particular, may act redundantly with the intraflagellar transport protein ift-139 to regulate the transport of specific ciliary cargo proteins such as che-3 which are related to motility. The sequence is that of Intraflagellar transport protein 43 homolog from Caenorhabditis elegans.